The following is a 361-amino-acid chain: 3-dehydroquinate synthase (361 aa).

Residues 60–65, 94–98, 118–119, Lys-131, and Lys-140 each bind NAD(+); these read DAEAAK, GATTD, and TT. Positions 173, 242, and 258 each coordinate Zn(2+).

This sequence belongs to the sugar phosphate cyclases superfamily. Dehydroquinate synthase family. Requires Co(2+) as cofactor. Zn(2+) is required as a cofactor. The cofactor is NAD(+).

The protein localises to the cytoplasm. It catalyses the reaction 7-phospho-2-dehydro-3-deoxy-D-arabino-heptonate = 3-dehydroquinate + phosphate. The protein operates within metabolic intermediate biosynthesis; chorismate biosynthesis; chorismate from D-erythrose 4-phosphate and phosphoenolpyruvate: step 2/7. In terms of biological role, catalyzes the conversion of 3-deoxy-D-arabino-heptulosonate 7-phosphate (DAHP) to dehydroquinate (DHQ). The polypeptide is 3-dehydroquinate synthase (Cutibacterium acnes (strain DSM 16379 / KPA171202) (Propionibacterium acnes)).